Here is a 164-residue protein sequence, read N- to C-terminus: MNRISIYRIKVLAFLFAVSTYVYPASSLELNEEARTVKLNSEGQSLTLNEEQIKKGKRLFNSHCGSCHVGGITKTNPNVGLDLESLNGANPPRNNINALVEYMKDPKTYDGSESIAEIHPSIKSADIFPKMRDLSDDDLKVIAGHILVQPKINSEKWGGGKIYY.

The N-terminal stretch at 1-27 (MNRISIYRIKVLAFLFAVSTYVYPASS) is a signal peptide. Heme c-binding residues include C64, C67, H68, and H119.

Belongs to the cytochrome c family. PsbV subfamily. As to quaternary structure, PSII is composed of 1 copy each of membrane proteins PsbA, PsbB, PsbC, PsbD, PsbE, PsbF, PsbH, PsbI, PsbJ, PsbK, PsbL, PsbM, PsbT, PsbY, PsbZ, Psb30/Ycf12, at least 3 peripheral proteins of the oxygen-evolving complex and a large number of cofactors. It forms dimeric complexes. The extrinsic subunits in red algae are PsbO (OEC33), PsbQ', cytochrome c-550 and PsbU. Requires heme c as cofactor.

Its subcellular location is the plastid. It is found in the chloroplast thylakoid membrane. Its function is as follows. One of the extrinsic, lumenal subunits of photosystem II (PSII). PSII is a light-driven water plastoquinone oxidoreductase, using light energy to abstract electrons from H(2)O, generating a proton gradient subsequently used for ATP formation. The extrinsic proteins stabilize the structure of photosystem II oxygen-evolving complex (OEC), the ion environment of oxygen evolution and protect the OEC against heat-induced inactivation. In Cyanidium caldarium (Red alga), this protein is Photosystem II extrinsic protein V.